Here is a 1023-residue protein sequence, read N- to C-terminus: 2-oxoglutarate dehydrogenase complex component E1 (1023 aa).

The transit peptide at 1–40 (MFHLRTCAAKLRPLTASQTVKTFSQNRPAAARTFQQIRCY) directs the protein to the mitochondrion. Residue K74 is modified to N6-succinyllysine. Position 100 is a phosphoserine (S100). Positions 143, 156, and 158 each coordinate Ca(2+). R312 contacts thiamine diphosphate. K401 is modified (N6-acetyllysine). Residues D411, N444, and I446 each coordinate thiamine diphosphate. The Mg(2+) site is built by D411, N444, and I446. A Glycyl lysine isopeptide (Lys-Gly) (interchain with G-Cter in ubiquitin) cross-link involves residue K534. Position 564 is an N6-succinyllysine (K564). A thiamine diphosphate-binding site is contributed by Q676. Residue K970 is modified to N6-acetyllysine.

Belongs to the alpha-ketoglutarate dehydrogenase family. Homodimer. The 2-oxoglutarate dehydrogenase complex is composed of OGDH (2-oxoglutarate dehydrogenase; E1), DLST (dihydrolipoamide succinyltransferase; E2), DLD (dihydrolipoamide dehydrogenase; E3) and the assembly factor KGD4. It contains multiple copies of the three enzymatic components (E1, E2 and E3). In the nucleus, the 2-oxoglutarate dehydrogenase complex associates with KAT2A. Interacts with ABHD11; this interaction maintains the functional lipoylation of the 2-oxoglutarate dehydrogenase complex. Requires thiamine diphosphate as cofactor. It depends on Mg(2+) as a cofactor.

It is found in the mitochondrion. The protein resides in the nucleus. The enzyme catalyses N(6)-[(R)-lipoyl]-L-lysyl-[protein] + 2-oxoglutarate + H(+) = N(6)-[(R)-S(8)-succinyldihydrolipoyl]-L-lysyl-[protein] + CO2. With respect to regulation, calcium ions and ADP stimulate, whereas ATP and NADH reduce catalytic activity. 2-oxoglutarate dehydrogenase (E1o) component of the 2-oxoglutarate dehydrogenase complex (OGDHC). Participates in the first step, rate limiting for the overall conversion of 2-oxoglutarate to succinyl-CoA and CO(2) catalyzed by the whole OGDHC. Catalyzes the irreversible decarboxylation of 2-oxoglutarate (alpha-ketoglutarate) via the thiamine diphosphate (ThDP) cofactor and subsequent transfer of the decarboxylated acyl intermediate on an oxidized dihydrolipoyl group that is covalently amidated to the E2 enzyme (dihydrolipoyllysine-residue succinyltransferase or DLST). Plays a key role in the Krebs (citric acid) cycle, which is a common pathway for oxidation of fuel molecules, including carbohydrates, fatty acids, and amino acids. Can catalyze the decarboxylation of 2-oxoadipate in vitro, but at a much lower rate than 2-oxoglutarate. Mainly active in the mitochondrion. A fraction of the 2-oxoglutarate dehydrogenase complex also localizes in the nucleus and is required for lysine succinylation of histones: associates with KAT2A on chromatin and provides succinyl-CoA to histone succinyltransferase KAT2A. In Macaca fascicularis (Crab-eating macaque), this protein is 2-oxoglutarate dehydrogenase complex component E1.